The sequence spans 482 residues: Dual specificity protein phosphatase 10 (482 aa).

The 118-residue stretch at Pro168–Asp285 folds into the Rhodanese domain. The interaction with MAP kinases stretch occupies residues Lys199 to Leu215. In terms of domain architecture, Tyrosine-protein phosphatase spans Glu321–Asn464. The Phosphocysteine intermediate role is filled by Cys408.

This sequence belongs to the protein-tyrosine phosphatase family. Non-receptor class dual specificity subfamily. In terms of assembly, monomer. Interacts with MAPK14.

It localises to the cytoplasm. Its subcellular location is the nucleus. The catalysed reaction is O-phospho-L-tyrosyl-[protein] + H2O = L-tyrosyl-[protein] + phosphate. The enzyme catalyses O-phospho-L-seryl-[protein] + H2O = L-seryl-[protein] + phosphate. It catalyses the reaction O-phospho-L-threonyl-[protein] + H2O = L-threonyl-[protein] + phosphate. Protein phosphatase involved in the inactivation of MAP kinases. Has a specificity for the MAPK11/MAPK12/MAPK13/MAPK14 subfamily. It preferably dephosphorylates p38. This is Dual specificity protein phosphatase 10 (DUSP10) from Bos taurus (Bovine).